The chain runs to 123 residues: Putative hypoxanthine phosphoribosyltransferase (123 aa).

In terms of biological role, may play a role in purine salvage. This Methanosarcina mazei (strain ATCC BAA-159 / DSM 3647 / Goe1 / Go1 / JCM 11833 / OCM 88) (Methanosarcina frisia) protein is Putative hypoxanthine phosphoribosyltransferase.